The following is a 668-amino-acid chain: Auxilin-like clathrin uncoating factor SWA2 (668 aa).

Residues 1–95 (MSDPFAHLLT…ANNTPPSALA (95 aa)) form a disordered region. A CB1 region spans residues 1 to 100 (MSDPFAHLLT…PSALANTDDD (100 aa)). Over residues 17–36 (SASASKETTPQSSNSPSITG) the composition is skewed to polar residues. Ser52 and Ser64 each carry phosphoserine. Positions 76–92 (PTNSTTKSNTANNTPPS) are enriched in low complexity. In terms of domain architecture, UBA spans 140–180 (DEVKDMEIARLMSLGLSIEEATEFYENDVTYERYLEILKSK). The interval 238–302 (EANDRLNNYS…FETKIDITKR (65 aa)) is CB2. Residues Ser264, Ser308, and Ser312 each carry the phosphoserine modification. 2 disordered regions span residues 302-323 (RTAP…EENS) and 339-359 (EGNL…ENSN). The interval 303–362 (TAPDVSHSSSPTSGILIEENSRRNEPLIEDSLLDFSEGNLTNSKSNEDSTLFNENSNTDS) is CB3. A compositionally biased stretch (polar residues) spans 340–359 (GNLTNSKSNEDSTLFNENSN). TPR repeat units lie at residues 374–407 (YNEF…LPLN), 412–445 (IIAL…FPSS), and 467–500 (PKIM…NFFD). The segment at 511-556 (QDFINPPPVKKSMPVKKKTTTTSPATKKQNLTASSSNSPISVDSTS) is disordered. The span at 539–555 (QNLTASSSNSPISVDST) shows a compositional bias: polar residues. The J domain occupies 603-668 (CNWKDVSMQD…DKFKLQNDIN (66 aa)).

Interacts with the clathrin light and heavy chains CLC1 and CHC1, respectively. Binds to clathrin with its N-terminal domain containing 3 clathrin-binding (CB) motifs. Association with clathrin is transient. Binds to polyubiquitin and ubiquitinated proteins.

The protein resides in the cytoplasm. It localises to the endoplasmic reticulum membrane. Cofactor for the uncoating of clathrin-coated vesicles (CCVs) by Hsp70-type chaperones (SSA1/2/3 and SSB1/2). Coat disassembly is important for fusion of vesicles with target membranes and for recycling components of clathrin coats to the cytoplasm for further rounds of vesicle formation. Binds to assembled clathrin and recruits the ATP-activated chaperone to CCVs. Stimulates the ATPase activity of the clathrin-associated Hsp70-type chaperone SSA1, which then disrupts clathrin-clathrin interactions, leading to release of the clathrin coat. In addition, prevents unproductive clathrin assembly in the cell. Also required for cortical endoplasmic reticulum inheritance. The polypeptide is Auxilin-like clathrin uncoating factor SWA2 (SWA2) (Saccharomyces cerevisiae (strain ATCC 204508 / S288c) (Baker's yeast)).